The following is a 387-amino-acid chain: Carboxynorspermidine/carboxyspermidine decarboxylase (387 aa).

At Lys-51 the chain carries N6-(pyridoxal phosphate)lysine. Substrate contacts are provided by Glu-248 and Asp-284.

Belongs to the Orn/Lys/Arg decarboxylase class-II family. NspC subfamily. As to quaternary structure, homodimer. The cofactor is pyridoxal 5'-phosphate.

It localises to the cytoplasm. It carries out the reaction carboxynorspermidine + H(+) = norspermidine + CO2. The catalysed reaction is carboxyspermidine + H(+) = spermidine + CO2. Its function is as follows. Catalyzes the decarboxylation of carboxynorspermidine and carboxyspermidine. Essential for biofilm formation. The chain is Carboxynorspermidine/carboxyspermidine decarboxylase from Vibrio cholerae serotype O1 (strain ATCC 39315 / El Tor Inaba N16961).